Consider the following 268-residue polypeptide: Type III pantothenate kinase (268 aa).

An ATP-binding site is contributed by 18–25; sequence DIGNTTTT. Substrate contacts are provided by residues Y108 and 115–118; that span reads GADR. D117 serves as the catalytic Proton acceptor. D138 lines the K(+) pocket. T141 contributes to the ATP binding site. T193 lines the substrate pocket.

This sequence belongs to the type III pantothenate kinase family. Homodimer. NH4(+) is required as a cofactor. The cofactor is K(+).

It localises to the cytoplasm. It carries out the reaction (R)-pantothenate + ATP = (R)-4'-phosphopantothenate + ADP + H(+). Its pathway is cofactor biosynthesis; coenzyme A biosynthesis; CoA from (R)-pantothenate: step 1/5. Catalyzes the phosphorylation of pantothenate (Pan), the first step in CoA biosynthesis. The sequence is that of Type III pantothenate kinase from Chlorobaculum parvum (strain DSM 263 / NCIMB 8327) (Chlorobium vibrioforme subsp. thiosulfatophilum).